The primary structure comprises 379 residues: Forkhead box protein E1 (379 aa).

The span at 1–11 (MTAESQQSPTR) shows a compositional bias: polar residues. The segment at 1–65 (MTAESQQSPT…RRRKRPLQKG (65 aa)) is disordered. Positions 54-63 (KGRRRKRPLQ) are enriched in basic residues. Residues 66–160 (KPPYSYIALI…DSGSFLRRRK (95 aa)) constitute a DNA-binding region (fork-head). The segment at 239–265 (HSGSEHAQPPNRSISPEVNSTSSSSCN) is disordered. Low complexity predominate over residues 251–265 (SISPEVNSTSSSSCN).

First expressed at late neural tube and early tailbud stages in the hypophyseal placode. Expression continues in the developing pituitary at late tailbud stages. As development progresses, expressed in the mesoderm of the branchial arches. At stage 38, expressed in the developing thyroid and in the pharyngeal endoderm.

Its subcellular location is the nucleus. In terms of biological role, transcription factor that binds consensus sites on a variety of gene promoters and activate their transcription. In Xenopus laevis (African clawed frog), this protein is Forkhead box protein E1.